The primary structure comprises 261 residues: Thiamine thiazole synthase (261 aa).

Residues Ser-33, 52-53 (ER), Gly-60, Val-124, and 152-154 (HVD) each bind NAD(+). Residues Asp-154 and His-169 each coordinate Fe cation. Met-219 is a binding site for NAD(+). Arg-229 is a glycine binding site.

It belongs to the THI4 family. Homooctamer; tetramer of dimers. The cofactor is Fe(2+).

The catalysed reaction is hydrogen sulfide + glycine + NAD(+) = ADP-5-ethyl-4-methylthiazole-2-carboxylate + nicotinamide + 3 H2O + H(+). Its pathway is cofactor biosynthesis; thiamine diphosphate biosynthesis. Its function is as follows. Involved in the biosynthesis of the thiazole moiety of thiamine. Catalyzes the conversion of NAD and glycine to adenosine diphosphate 5-(2-hydroxyethyl)-4-methylthiazole-2-carboxylate (ADT), an adenylated thiazole intermediate, using free sulfide as a source of sulfur. The protein is Thiamine thiazole synthase of Pyrobaculum arsenaticum (strain DSM 13514 / JCM 11321 / PZ6).